The primary structure comprises 371 residues: Chaperone protein DnaJ (371 aa).

Residues 5–70 (CYYEILNVSK…SKRSRYDQFG (66 aa)) form the J domain. The segment at 127–204 (GVEKEITIPR…CYGNGKVKKQ (78 aa)) adopts a CR-type zinc-finger fold. Residues cysteine 140, cysteine 143, cysteine 156, cysteine 159, cysteine 178, cysteine 181, cysteine 192, and cysteine 195 each contribute to the Zn(2+) site. CXXCXGXG motif repeat units lie at residues 140-147 (CDSCDGTG), 156-163 (CHACHGQG), 178-185 (CPVCNGTG), and 192-199 (CDACYGNG).

The protein belongs to the DnaJ family. As to quaternary structure, homodimer. Zn(2+) serves as cofactor.

The protein resides in the cytoplasm. Participates actively in the response to hyperosmotic and heat shock by preventing the aggregation of stress-denatured proteins and by disaggregating proteins, also in an autonomous, DnaK-independent fashion. Unfolded proteins bind initially to DnaJ; upon interaction with the DnaJ-bound protein, DnaK hydrolyzes its bound ATP, resulting in the formation of a stable complex. GrpE releases ADP from DnaK; ATP binding to DnaK triggers the release of the substrate protein, thus completing the reaction cycle. Several rounds of ATP-dependent interactions between DnaJ, DnaK and GrpE are required for fully efficient folding. Also involved, together with DnaK and GrpE, in the DNA replication of plasmids through activation of initiation proteins. This is Chaperone protein DnaJ from Francisella tularensis subsp. tularensis (strain WY96-3418).